We begin with the raw amino-acid sequence, 119 residues long: Large ribosomal subunit protein bL20 (119 aa).

The protein belongs to the bacterial ribosomal protein bL20 family.

Its function is as follows. Binds directly to 23S ribosomal RNA and is necessary for the in vitro assembly process of the 50S ribosomal subunit. It is not involved in the protein synthesizing functions of that subunit. This is Large ribosomal subunit protein bL20 from Shewanella woodyi (strain ATCC 51908 / MS32).